A 625-amino-acid polypeptide reads, in one-letter code: E3 ubiquitin-protein ligase synoviolin (625 aa).

Over 1–4 (MVRA) the chain is Cytoplasmic. A helical membrane pass occupies residues 5 to 25 (ALVTATSLALTGAVVAHAYFL). The Lumenal portion of the chain corresponds to 26-40 (KHQFYPTVVYLTKSS). A helical transmembrane segment spans residues 41–61 (PSMAVLYIQAFVLVFLLGKLM). Topologically, residues 62-98 (RKVFFGQLRAAEMEHLIERSWYAVTETCLAFTVFRDD) are cytoplasmic. The chain crosses the membrane as a helical span at residues 99–119 (FSPRFVALFTLLLFLKCFHWL). Residues 120 to 135 (AEDRVDFMERSPNISW) are Lumenal-facing. Residues 136 to 156 (VFHFRVLSLMVLLGVMDFLFV) form a helical membrane-spanning segment. Topologically, residues 157-169 (NHACHSIITRGAS) are cytoplasmic. Residues 170–190 (VQLVFGFEYAILMTMVLTTFI) form a helical membrane-spanning segment. The Lumenal portion of the chain corresponds to 191 to 212 (KYTLHTIDLQSENPWDNKAVYM). A helical membrane pass occupies residues 213–235 (LYTELFTGFIKVLLYMAFMTIMI). Residues 236–270 (KVHTFPLFAIRPMYLAMRQFKKAVTDAIMSRRAIR) form an interaction with p53/TP53 region. Topologically, residues 236 to 625 (KVHTFPLFAI…GNLLKLASVN (390 aa)) are cytoplasmic. The Zn(2+) site is built by Cys291, Cys294, Cys307, His309, His312, Cys315, Cys326, and Cys329. An RING-type; atypical zinc finger spans residues 291–330 (CIICREEMVTGAKKLPCNHIFHSSCLRSWFQRQQTCPTCR). 4 disordered regions span residues 337 to 361 (SQPN…NAPI), 390 to 434 (PPPA…SAAP), 462 to 487 (FMSS…LEQE), and 523 to 625 (LSPP…ASVN). A compositionally biased stretch (pro residues) spans 342-361 (TPAPPAAQAPAPPAPANAPI). The span at 423-434 (AQSTAEAASAAP) shows a compositional bias: low complexity. Over residues 462–471 (FMSSMPPPPS) the composition is skewed to pro residues. Polar residues predominate over residues 523-564 (LSPPRSETNTGETSESANVESSPSTANTETAGQEIQSQSGES).

This sequence belongs to the HRD1 family. As to quaternary structure, homodimer.

It is found in the endoplasmic reticulum membrane. The catalysed reaction is S-ubiquitinyl-[E2 ubiquitin-conjugating enzyme]-L-cysteine + [acceptor protein]-L-lysine = [E2 ubiquitin-conjugating enzyme]-L-cysteine + N(6)-ubiquitinyl-[acceptor protein]-L-lysine.. It participates in protein modification; protein ubiquitination. E3 ubiquitin-protein ligase which accepts ubiquitin specifically from endoplasmic reticulum-associated UBC7 E2 ligase and transfers it to substrates, promoting their degradation. Component of the endoplasmic reticulum quality control (ERQC) system also called ER-associated degradation (ERAD) involved in ubiquitin-dependent degradation of misfolded endoplasmic reticulum proteins. Also promotes the degradation of normal but naturally short-lived proteins. Protects cells from ER stress-induced apoptosis. Sequesters p53 in the cytoplasm and promotes its degradation, thereby negatively regulating its biological function in transcription, cell cycle regulation and apoptosis. The polypeptide is E3 ubiquitin-protein ligase synoviolin (syvn1) (Danio rerio (Zebrafish)).